The chain runs to 283 residues: MKHFVVIANAYKDRDFALTNKIVAYIEQKGGTAKGLMSNVEAISDNEFELEDIPQDTQCILVLGGDGTLIRAATRVETLEIPLMGVNLGTLGYLCEVEEATVFDAIDSLMADKYMTEDRIMLIGHKRGSETSRVALNDIVIHRKGNLQILSLNVYVNGEFLNNYHADGIIVATPTGSTGYSMSAGGPIVDPKGDMILLTPNNAHNLTSKSIVLSGDDEIEIEILSRREQNDELACVSYDGDTTAELAVGDRFVISRAANHTKICKLHQRSFLEILRKKMGNYS.

The Proton acceptor role is filled by Asp-66. NAD(+)-binding positions include 66–67 (DG), Arg-71, 137–138 (ND), His-165, Asp-167, and 178–183 (TGYSMS).

This sequence belongs to the NAD kinase family. A divalent metal cation is required as a cofactor.

It is found in the cytoplasm. The catalysed reaction is NAD(+) + ATP = ADP + NADP(+) + H(+). In terms of biological role, involved in the regulation of the intracellular balance of NAD and NADP, and is a key enzyme in the biosynthesis of NADP. Catalyzes specifically the phosphorylation on 2'-hydroxyl of the adenosine moiety of NAD to yield NADP. The polypeptide is NAD kinase (Agathobacter rectalis (strain ATCC 33656 / DSM 3377 / JCM 17463 / KCTC 5835 / VPI 0990) (Eubacterium rectale)).